The primary structure comprises 310 residues: MKPKIFIDGEHGTTGLQIRTRLAERDDLEVISIPEAERRNKDLRADYLRAADIAILCLPDDASKEAVSLLEGHNSTRIIDTSTAHRVHPDWAYGFAELTKGQRERIAEARLVANPGCYPTGAIALVRPLRDAGLLPADYPVSVNAVSGYTGGGKQLIAQMEDRNHPDYLAANNFLYGLPLKHKHVPELQLHGRLDRRPIFSPSVGRFPQGMIVQVPLFLSELEGSPSLAKVHAVLTEHYAGQDIVDVVPLEESAKLPRVDAEELAGKDGMKLFVFGTEDHGQVNLVALLDNLGKGASGAAVQNMNLMLGK.

Cysteine 117 is an active-site residue.

It belongs to the NAGSA dehydrogenase family. Type 2 subfamily.

The protein localises to the cytoplasm. The enzyme catalyses N-acetyl-L-glutamate 5-semialdehyde + phosphate + NADP(+) = N-acetyl-L-glutamyl 5-phosphate + NADPH + H(+). It participates in amino-acid biosynthesis; L-arginine biosynthesis; N(2)-acetyl-L-ornithine from L-glutamate: step 3/4. Functionally, catalyzes the NADPH-dependent reduction of N-acetyl-5-glutamyl phosphate to yield N-acetyl-L-glutamate 5-semialdehyde. This Brucella suis (strain ATCC 23445 / NCTC 10510) protein is N-acetyl-gamma-glutamyl-phosphate reductase.